A 308-amino-acid polypeptide reads, in one-letter code: MPTGDYDSKPSWADQVEEEGIDAEPLSPQIRKPDPVSFVLDTPREVINGNIKTITEYKLNDDDKTVKIVRTFKIETVKASKVVAQRKNWKKFGNSEYDPPGPNVATTTVSDDVLMTFITNKEDLNNQEEEDPMNKLKGQKIVSCRICKGDHWTTRCPYKDTLGPMQKELAEQLGLSTGDKEKAPGAEPEPAQAPVSKTGKYVPPSLRDGGSRRGESMQPNRRADDNATIRVTNLSEDTRETDLQELFRPFGSISRIYLAKDKTTGQSKGFAFISFHRREDAARAIAGVSGFGYDHLILNVEWAKPSTN.

2 disordered regions span residues 1–35 (MPTG…KPDP) and 177–226 (TGDK…ADDN). Positions 185-194 (GAEPEPAQAP) are enriched in low complexity. The span at 209–226 (GGSRRGESMQPNRRADDN) shows a compositional bias: basic and acidic residues. Residues 227 to 305 (ATIRVTNLSE…LILNVEWAKP (79 aa)) form the RRM domain.

It belongs to the eIF-3 subunit G family. In terms of assembly, component of the eukaryotic translation initiation factor 3 (eIF-3) complex, which is composed of 13 subunits: eif3a, eif3b, eif3c, eif3d, eif3e, eif3f, eif3g, eif3h, eif3i, eif3j, eif3k, eif3l and eif3m.

The protein localises to the cytoplasm. RNA-binding component of the eukaryotic translation initiation factor 3 (eIF-3) complex, which is involved in protein synthesis of a specialized repertoire of mRNAs and, together with other initiation factors, stimulates binding of mRNA and methionyl-tRNAi to the 40S ribosome. The eIF-3 complex specifically targets and initiates translation of a subset of mRNAs involved in cell proliferation. This subunit can bind 18S rRNA. The chain is Eukaryotic translation initiation factor 3 subunit G-A (eif3g-a) from Xenopus laevis (African clawed frog).